Reading from the N-terminus, the 81-residue chain is Sulfur carrier protein TusA (81 aa).

C19 serves as the catalytic Cysteine persulfide intermediate.

This sequence belongs to the sulfur carrier protein TusA family. In terms of assembly, interacts with IscS.

Its subcellular location is the cytoplasm. The protein operates within tRNA modification. In terms of biological role, sulfur carrier protein involved in sulfur trafficking in the cell. Part of a sulfur-relay system required for 2-thiolation during synthesis of 2-thiouridine of the modified wobble base 5-methylaminomethyl-2-thiouridine (mnm(5)s(2)U) in tRNA. Interacts with IscS and stimulates its cysteine desulfurase activity. Accepts an activated sulfur from IscS, which is then transferred to TusD, and thus determines the direction of sulfur flow from IscS to 2-thiouridine formation. Also appears to be involved in sulfur transfer for the biosynthesis of molybdopterin. This chain is Sulfur carrier protein TusA, found in Shigella boydii serotype 18 (strain CDC 3083-94 / BS512).